The chain runs to 360 residues: Glutamate 5-kinase (360 aa).

Lysine 7 provides a ligand contact to ATP. Substrate-binding residues include serine 47, aspartate 134, and asparagine 146. ATP is bound by residues 166–167 and 210–216; these read TD and TGGISTK. Residues 275-356 form the PUA domain; that stretch reads VGKITLDDGA…SSIIVVHRDV (82 aa).

Belongs to the glutamate 5-kinase family.

It localises to the cytoplasm. It carries out the reaction L-glutamate + ATP = L-glutamyl 5-phosphate + ADP. Its pathway is amino-acid biosynthesis; L-proline biosynthesis; L-glutamate 5-semialdehyde from L-glutamate: step 1/2. Its function is as follows. Catalyzes the transfer of a phosphate group to glutamate to form L-glutamate 5-phosphate. The chain is Glutamate 5-kinase from Prochlorococcus marinus (strain MIT 9312).